The chain runs to 1239 residues: DNA topoisomerase 2 (1239 aa).

Residues asparagine 65, asparagine 96, 124 to 126 (SSN), 137 to 144 (GRHGYGAK), and 354 to 356 (QSK) contribute to the ATP site. In terms of domain architecture, Toprim spans 434-548 (RTLIVTEGDS…SLLQHNPGYI (115 aa)). Mg(2+) is bound by residues glutamate 440, aspartate 517, and aspartate 519. In terms of domain architecture, Topo IIA-type catalytic spans 685–1101 (IPHCVDGLKP…TPVKMWLTDL (417 aa)). Catalysis depends on tyrosine 775, which acts as the O-(5'-phospho-DNA)-tyrosine intermediate. The interaction with DNA stretch occupies residues 956-965 (ALSQRIYING). The interval 1167-1206 (PASKRKPEDTYGGALSSGGSTRNVGKRLTGARGAKKKKVV) is disordered.

It belongs to the type II topoisomerase family. Homodimer. It depends on Mg(2+) as a cofactor. The cofactor is Mn(2+). Ca(2+) serves as cofactor.

Its subcellular location is the nucleus. The protein resides in the mitochondrion matrix. It is found in the kinetoplast. It carries out the reaction ATP-dependent breakage, passage and rejoining of double-stranded DNA.. In terms of biological role, control of topological states of DNA by transient breakage and subsequent rejoining of DNA strands. Topoisomerase II makes double-strand breaks. In Crithidia fasciculata, this protein is DNA topoisomerase 2 (TOP2).